A 272-amino-acid polypeptide reads, in one-letter code: 3-methyl-2-oxobutanoate hydroxymethyltransferase (272 aa).

Mg(2+)-binding residues include Asp-43 and Asp-82. 3-methyl-2-oxobutanoate-binding positions include 43–44 (DS), Asp-82, and Lys-112. Residue Glu-114 coordinates Mg(2+). Glu-179 functions as the Proton acceptor in the catalytic mechanism.

This sequence belongs to the PanB family. Homodecamer; pentamer of dimers. Mg(2+) serves as cofactor.

The protein resides in the cytoplasm. It carries out the reaction 3-methyl-2-oxobutanoate + (6R)-5,10-methylene-5,6,7,8-tetrahydrofolate + H2O = 2-dehydropantoate + (6S)-5,6,7,8-tetrahydrofolate. The protein operates within cofactor biosynthesis; (R)-pantothenate biosynthesis; (R)-pantoate from 3-methyl-2-oxobutanoate: step 1/2. In terms of biological role, catalyzes the reversible reaction in which hydroxymethyl group from 5,10-methylenetetrahydrofolate is transferred onto alpha-ketoisovalerate to form ketopantoate. This Staphylococcus aureus (strain Mu3 / ATCC 700698) protein is 3-methyl-2-oxobutanoate hydroxymethyltransferase.